Reading from the N-terminus, the 391-residue chain is Mannose-6-phosphate isomerase (391 aa).

Zn(2+)-binding residues include glutamine 97, histidine 99, glutamate 134, and histidine 255. Arginine 274 is a catalytic residue. Lysine 280 is modified (N6-acetyllysine).

This sequence belongs to the mannose-6-phosphate isomerase type 1 family. Zn(2+) is required as a cofactor.

It is found in the cytoplasm. It catalyses the reaction D-mannose 6-phosphate = D-fructose 6-phosphate. Involved in the conversion of glucose to GDP-L-fucose, which can be converted to L-fucose, a capsular polysaccharide. This chain is Mannose-6-phosphate isomerase (manA), found in Escherichia coli (strain K12).